A 177-amino-acid polypeptide reads, in one-letter code: Large ribosomal subunit protein uL6 (177 aa).

This sequence belongs to the universal ribosomal protein uL6 family. In terms of assembly, part of the 50S ribosomal subunit.

This protein binds to the 23S rRNA, and is important in its secondary structure. It is located near the subunit interface in the base of the L7/L12 stalk, and near the tRNA binding site of the peptidyltransferase center. The protein is Large ribosomal subunit protein uL6 of Pseudomonas putida (strain W619).